The sequence spans 47 residues: MFEGLLFFISAGIVCELAAINRNGRKNIKQQAELIQILKENLYKDIK.

This is an uncharacterized protein from Bacillus subtilis (strain 168).